Reading from the N-terminus, the 344-residue chain is Galactinol synthase 1 (344 aa).

The active site involves Lys111. Mn(2+)-binding residues include Asp127, Asp129, and His265.

Belongs to the glycosyltransferase 8 family. Galactosyltransferase subfamily. The cofactor is a divalent metal cation. In terms of tissue distribution, accumulates in mature seeds. Expressed in seedlings (axes and cotyledons), meristems, vascular tissues and emerging lateral roots. Present in abscission zones.

It localises to the cytoplasm. It catalyses the reaction myo-inositol + UDP-alpha-D-galactose = alpha-D-galactosyl-(1-&gt;3)-1D-myo-inositol + UDP + H(+). Its function is as follows. Galactinol synthase involved in the biosynthesis of raffinose family oligosaccharides (RFOs) that function as osmoprotectants. Promotes plant stress tolerance such as heat, chilling, salinity and methylviologen (MV), a superoxide radical generating drug, by mediating raffinose accumulation, an osmoprotective substance. The polypeptide is Galactinol synthase 1 (GOLS1) (Arabidopsis thaliana (Mouse-ear cress)).